The following is a 303-amino-acid chain: MIKQRTLKNTIRATGVGLHSGEKVYLTLKPAPVDTGIVFRRADLDPVVEIPARAANVGETTMSTTLVNGDVKVDTVEHLLSAMAGLGIDNAYVELSASEVPIMDGSAGPFVFLIQSAGLEEQDAAKKFIRILREVTVEEGDKRATFLPFEGFKVSFEIDFDHPVLRNRTQSASVDFSSTSFVKEVSRARTFGFMRDIEYLRKHNLALGGSVENAIVVDEDGVLNEDGLRYEDEFVKHKILDAIGDLYLLGNSLIGEFKGFKSGHALNNQLLRKLIAETDAWEVVTFEDASTAPISYMRPVAAV.

Zn(2+) is bound by residues His-78, His-237, and Asp-241. His-264 acts as the Proton donor in catalysis.

It belongs to the LpxC family. Requires Zn(2+) as cofactor.

The enzyme catalyses a UDP-3-O-[(3R)-3-hydroxyacyl]-N-acetyl-alpha-D-glucosamine + H2O = a UDP-3-O-[(3R)-3-hydroxyacyl]-alpha-D-glucosamine + acetate. It functions in the pathway glycolipid biosynthesis; lipid IV(A) biosynthesis; lipid IV(A) from (3R)-3-hydroxytetradecanoyl-[acyl-carrier-protein] and UDP-N-acetyl-alpha-D-glucosamine: step 2/6. Functionally, catalyzes the hydrolysis of UDP-3-O-myristoyl-N-acetylglucosamine to form UDP-3-O-myristoylglucosamine and acetate, the committed step in lipid A biosynthesis. In Pseudomonas putida (strain ATCC 700007 / DSM 6899 / JCM 31910 / BCRC 17059 / LMG 24140 / F1), this protein is UDP-3-O-acyl-N-acetylglucosamine deacetylase.